The chain runs to 197 residues: Imidazoleglycerol-phosphate dehydratase (197 aa).

It belongs to the imidazoleglycerol-phosphate dehydratase family.

The protein resides in the cytoplasm. The enzyme catalyses D-erythro-1-(imidazol-4-yl)glycerol 3-phosphate = 3-(imidazol-4-yl)-2-oxopropyl phosphate + H2O. It functions in the pathway amino-acid biosynthesis; L-histidine biosynthesis; L-histidine from 5-phospho-alpha-D-ribose 1-diphosphate: step 6/9. In Nitrosococcus oceani (strain ATCC 19707 / BCRC 17464 / JCM 30415 / NCIMB 11848 / C-107), this protein is Imidazoleglycerol-phosphate dehydratase.